We begin with the raw amino-acid sequence, 332 residues long: tRNA (cytosine(38)-C(5))-methyltransferase (332 aa).

The SAM-dependent MTase C5-type domain maps to 3–332 (HKILELYSGI…ISELLKILFE (330 aa)). S-adenosyl-L-homocysteine-binding positions include 12 to 14 (IGG), 33 to 34 (DI), 55 to 56 (NI), and Ser-75. Residue Cys-78 is part of the active site. Residues Gln-79, Ser-97, and 316–317 (NS) each bind S-adenosyl-L-homocysteine.

It belongs to the class I-like SAM-binding methyltransferase superfamily. C5-methyltransferase family.

It localises to the cytoplasm. Its subcellular location is the nucleus. It catalyses the reaction cytidine(38) in tRNA + S-adenosyl-L-methionine = 5-methylcytidine(38) in tRNA + S-adenosyl-L-homocysteine + H(+). The catalysed reaction is a 2'-deoxycytidine in DNA + S-adenosyl-L-methionine = a 5-methyl-2'-deoxycytidine in DNA + S-adenosyl-L-homocysteine + H(+). In terms of biological role, specifically methylates cytosine 38 in the anticodon loop of tRNA(Asp). Also has DNA (cytosine-5)-methyltransferase activity. Shows affinity for both tRNA(Asp) and DNA substrates. This chain is tRNA (cytosine(38)-C(5))-methyltransferase, found in Spodoptera frugiperda (Fall armyworm).